A 258-amino-acid chain; its full sequence is Probable F-box protein At2g29610 (258 aa).

The tract at residues 1–25 (MVELSEIPGDPNGADPNNNPQEEDE) is disordered. The span at 8-20 (PGDPNGADPNNNP) shows a compositional bias: low complexity. Positions 28 to 74 (LPILLQLPEELIERIIAHFPQCYSPSPILVCETFRQVINSDHFYYVT) constitute an F-box domain.

The polypeptide is Probable F-box protein At2g29610 (Arabidopsis thaliana (Mouse-ear cress)).